The following is a 623-amino-acid chain: Leucine aminopeptidase 2 (623 aa).

A peptide is bound by residues 136–138 and 261–266; these read QCE and PYGGME. Histidine 290 contributes to the Zn(2+) binding site. Glutamate 291 acts as the Proton acceptor in catalysis. Residues histidine 294 and glutamate 313 each contribute to the Zn(2+) site. The Proton donor role is filled by tyrosine 391.

Belongs to the peptidase M1 family. It depends on Zn(2+) as a cofactor.

It localises to the cytoplasm. It is found in the nucleus. It carries out the reaction an epoxide + H2O = an ethanediol. Functionally, aminopeptidase that preferentially cleaves di- and tripeptides. Also has low epoxide hydrolase activity (in vitro). Can hydrolyze the epoxide leukotriene LTA(4) but it forms preferentially 5,6-dihydroxy-7,9,11,14-eicosatetraenoic acid rather than the cytokine leukotriene B(4) as the product compared to the homologous mammalian enzyme (in vitro). The sequence is that of Leucine aminopeptidase 2 (LKH1) from Candida albicans (strain SC5314 / ATCC MYA-2876) (Yeast).